We begin with the raw amino-acid sequence, 425 residues long: Serine--tRNA ligase (425 aa).

Position 228-230 (228-230) interacts with L-serine; that stretch reads TAE. ATP is bound at residue 259–261; that stretch reads RSE. Glu-282 contacts L-serine. 346–349 is a binding site for ATP; it reads EIAS. An L-serine-binding site is contributed by Ser-382.

The protein belongs to the class-II aminoacyl-tRNA synthetase family. Type-1 seryl-tRNA synthetase subfamily. In terms of assembly, homodimer. The tRNA molecule binds across the dimer.

It is found in the cytoplasm. The catalysed reaction is tRNA(Ser) + L-serine + ATP = L-seryl-tRNA(Ser) + AMP + diphosphate + H(+). It catalyses the reaction tRNA(Sec) + L-serine + ATP = L-seryl-tRNA(Sec) + AMP + diphosphate + H(+). It functions in the pathway aminoacyl-tRNA biosynthesis; selenocysteinyl-tRNA(Sec) biosynthesis; L-seryl-tRNA(Sec) from L-serine and tRNA(Sec): step 1/1. In terms of biological role, catalyzes the attachment of serine to tRNA(Ser). Is also able to aminoacylate tRNA(Sec) with serine, to form the misacylated tRNA L-seryl-tRNA(Sec), which will be further converted into selenocysteinyl-tRNA(Sec). In Rickettsia peacockii (strain Rustic), this protein is Serine--tRNA ligase.